Consider the following 505-residue polypeptide: L-carnitine/gamma-butyrobetaine antiporter (505 aa).

A run of 12 helical transmembrane segments spans residues 10–30 (IEPKVFFPPLIIVGILCWLTV), 50–70 (IWGWAFEWYMVVMLFGWFWLV), 92–112 (IFMMFASCTSAAVLFWGSIEI), 143–163 (GPLPWATYSFLSVAFAYFFFV), 195–215 (FYLVALIFAMGTSLGLATPLV), 231–251 (LDAIIITCWIVLNAICVACGL), 263–283 (SYLSFLMLGWVFIVSGASFIM), 316–336 (WTVFYWAWWVIYAIQMSIFLA), 347–367 (LCFGMVLGLTASTWILWTVLG), 403–423 (FSTATMWGFFILCFIATVTLI), 446–466 (LLVRIGWSVLVGVIGIVLLAL), and 475–495 (AIIAGGCPLFFVNIMVTLSFI).

This sequence belongs to the BCCT transporter (TC 2.A.15) family. CaiT subfamily. Homotrimer.

It localises to the cell inner membrane. The enzyme catalyses 4-(trimethylamino)butanoate(in) + (R)-carnitine(out) = 4-(trimethylamino)butanoate(out) + (R)-carnitine(in). It participates in amine and polyamine metabolism; carnitine metabolism. Catalyzes the exchange of L-carnitine for gamma-butyrobetaine. In Citrobacter koseri (strain ATCC BAA-895 / CDC 4225-83 / SGSC4696), this protein is L-carnitine/gamma-butyrobetaine antiporter.